We begin with the raw amino-acid sequence, 363 residues long: Chorismate synthase (363 aa).

Arg48 contributes to the NADP(+) binding site. Residues 125–127, 238–239, Gly278, 293–297, and Arg319 contribute to the FMN site; these read RSS, NA, and KPTAS.

The protein belongs to the chorismate synthase family. As to quaternary structure, homotetramer. Requires FMNH2 as cofactor.

The catalysed reaction is 5-O-(1-carboxyvinyl)-3-phosphoshikimate = chorismate + phosphate. Its pathway is metabolic intermediate biosynthesis; chorismate biosynthesis; chorismate from D-erythrose 4-phosphate and phosphoenolpyruvate: step 7/7. In terms of biological role, catalyzes the anti-1,4-elimination of the C-3 phosphate and the C-6 proR hydrogen from 5-enolpyruvylshikimate-3-phosphate (EPSP) to yield chorismate, which is the branch point compound that serves as the starting substrate for the three terminal pathways of aromatic amino acid biosynthesis. This reaction introduces a second double bond into the aromatic ring system. This chain is Chorismate synthase, found in Acinetobacter baumannii (strain ACICU).